A 130-amino-acid polypeptide reads, in one-letter code: Small ribosomal subunit protein uS4 (130 aa).

N6-acetyllysine is present on Lys-64. Lys-91 is covalently cross-linked (Glycyl lysine isopeptide (Lys-Gly) (interchain with G-Cter in SUMO2)). The S4 RNA-binding domain occupies 106–130; that stretch reads RRLQTQVFKLGLAXSIHHXRVLIRQ. Lys-114 bears the N6-acetyllysine mark.

The protein belongs to the universal ribosomal protein uS4 family. Component of the small ribosomal subunit. Identified in a IGF2BP1-dependent mRNP granule complex containing untranslated mRNAs. Part of the small subunit (SSU) processome, composed of more than 70 proteins and the RNA chaperone small nucleolar RNA (snoRNA) U3.

It localises to the cytoplasm. The protein resides in the nucleus. Its subcellular location is the nucleolus. In terms of biological role, component of the small ribosomal subunit. The ribosome is a large ribonucleoprotein complex responsible for the synthesis of proteins in the cell. Part of the small subunit (SSU) processome, first precursor of the small eukaryotic ribosomal subunit. During the assembly of the SSU processome in the nucleolus, many ribosome biogenesis factors, an RNA chaperone and ribosomal proteins associate with the nascent pre-rRNA and work in concert to generate RNA folding, modifications, rearrangements and cleavage as well as targeted degradation of pre-ribosomal RNA by the RNA exosome. The polypeptide is Small ribosomal subunit protein uS4 (RPS9) (Sus scrofa (Pig)).